The sequence spans 260 residues: MNNLNDPPNWNIRPNARADGGDGSKWNYALLVPMLGLAAFRWIWSRESQKEIEKARKAYHQRTAAFQQDLEAKYHAVISEHRRAVAQLSLELEKEQNRTSSFREALISQGRKLAEEKKLLEQERAQIKQEKSRLQPLRNVYLSCLQEEDDWQRRAQHVLKEVGEALEERQNIYCSLIIPRSARLELEKSLLVRTSVDPVAADLEMAAGLSDIFKHDKHCGDVWNTNKRQNGKLMWMYLKYWELLVELKKFKKVEKVILEK.

Positions 76 to 139 (AVISEHRRAV…EKSRLQPLRN (64 aa)) form a coiled coil.

This Mus musculus (Mouse) protein is Coiled-coil domain-containing protein 127 (Ccdc127).